The chain runs to 306 residues: Porphobilinogen deaminase (306 aa).

Cys-237 bears the S-(dipyrrolylmethanemethyl)cysteine mark.

It belongs to the HMBS family. In terms of assembly, monomer. It depends on dipyrromethane as a cofactor.

The enzyme catalyses 4 porphobilinogen + H2O = hydroxymethylbilane + 4 NH4(+). The protein operates within porphyrin-containing compound metabolism; protoporphyrin-IX biosynthesis; coproporphyrinogen-III from 5-aminolevulinate: step 2/4. Functionally, tetrapolymerization of the monopyrrole PBG into the hydroxymethylbilane pre-uroporphyrinogen in several discrete steps. The chain is Porphobilinogen deaminase from Syntrophus aciditrophicus (strain SB).